The chain runs to 323 residues: Lipoyl synthase (323 aa).

[4Fe-4S] cluster contacts are provided by C61, C66, C72, C87, C91, C94, and S300. The Radical SAM core domain maps to 73–289; that stretch reads WDKKHATFMI…ETVAYSKGFL (217 aa).

This sequence belongs to the radical SAM superfamily. Lipoyl synthase family. Requires [4Fe-4S] cluster as cofactor.

Its subcellular location is the cytoplasm. It catalyses the reaction [[Fe-S] cluster scaffold protein carrying a second [4Fe-4S](2+) cluster] + N(6)-octanoyl-L-lysyl-[protein] + 2 oxidized [2Fe-2S]-[ferredoxin] + 2 S-adenosyl-L-methionine + 4 H(+) = [[Fe-S] cluster scaffold protein] + N(6)-[(R)-dihydrolipoyl]-L-lysyl-[protein] + 4 Fe(3+) + 2 hydrogen sulfide + 2 5'-deoxyadenosine + 2 L-methionine + 2 reduced [2Fe-2S]-[ferredoxin]. Its pathway is protein modification; protein lipoylation via endogenous pathway; protein N(6)-(lipoyl)lysine from octanoyl-[acyl-carrier-protein]: step 2/2. Its function is as follows. Catalyzes the radical-mediated insertion of two sulfur atoms into the C-6 and C-8 positions of the octanoyl moiety bound to the lipoyl domains of lipoate-dependent enzymes, thereby converting the octanoylated domains into lipoylated derivatives. The polypeptide is Lipoyl synthase (Rhizobium leguminosarum bv. trifolii (strain WSM2304)).